We begin with the raw amino-acid sequence, 375 residues long: Queuine tRNA-ribosyltransferase (375 aa).

D93 functions as the Proton acceptor in the catalytic mechanism. Residues D93–Y97, D147, Q194, and G221 each bind substrate. Residues G252–D258 form an RNA binding region. The active-site Nucleophile is D271. The tract at residues T276 to R280 is RNA binding; important for wobble base 34 recognition. Zn(2+)-binding residues include C309, C311, C314, and H340.

This sequence belongs to the queuine tRNA-ribosyltransferase family. As to quaternary structure, homodimer. Within each dimer, one monomer is responsible for RNA recognition and catalysis, while the other monomer binds to the replacement base PreQ1. Zn(2+) serves as cofactor.

The enzyme catalyses 7-aminomethyl-7-carbaguanine + guanosine(34) in tRNA = 7-aminomethyl-7-carbaguanosine(34) in tRNA + guanine. It functions in the pathway tRNA modification; tRNA-queuosine biosynthesis. Catalyzes the base-exchange of a guanine (G) residue with the queuine precursor 7-aminomethyl-7-deazaguanine (PreQ1) at position 34 (anticodon wobble position) in tRNAs with GU(N) anticodons (tRNA-Asp, -Asn, -His and -Tyr). Catalysis occurs through a double-displacement mechanism. The nucleophile active site attacks the C1' of nucleotide 34 to detach the guanine base from the RNA, forming a covalent enzyme-RNA intermediate. The proton acceptor active site deprotonates the incoming PreQ1, allowing a nucleophilic attack on the C1' of the ribose to form the product. After dissociation, two additional enzymatic reactions on the tRNA convert PreQ1 to queuine (Q), resulting in the hypermodified nucleoside queuosine (7-(((4,5-cis-dihydroxy-2-cyclopenten-1-yl)amino)methyl)-7-deazaguanosine). The chain is Queuine tRNA-ribosyltransferase from Sphingopyxis alaskensis (strain DSM 13593 / LMG 18877 / RB2256) (Sphingomonas alaskensis).